Here is a 1274-residue protein sequence, read N- to C-terminus: Meiosis inhibitor protein 1 (1274 aa).

Expressed predominantly in testis. Weakly expressed in spleen and thymus. Expressed in the ovaries, Fallopian tubes and uterus.

In terms of biological role, required for normal meiotic chromosome synapsis. May be involved in the formation of meiotic double-strand breaks (DSBs) in spermatocytes. The sequence is that of Meiosis inhibitor protein 1 from Homo sapiens (Human).